The primary structure comprises 287 residues: 2-dehydro-3-deoxyphosphooctonate aldolase (287 aa).

It belongs to the KdsA family.

Its subcellular location is the cytoplasm. The enzyme catalyses D-arabinose 5-phosphate + phosphoenolpyruvate + H2O = 3-deoxy-alpha-D-manno-2-octulosonate-8-phosphate + phosphate. The protein operates within carbohydrate biosynthesis; 3-deoxy-D-manno-octulosonate biosynthesis; 3-deoxy-D-manno-octulosonate from D-ribulose 5-phosphate: step 2/3. Its pathway is bacterial outer membrane biogenesis; lipopolysaccharide biosynthesis. This is 2-dehydro-3-deoxyphosphooctonate aldolase from Leptospira interrogans serogroup Icterohaemorrhagiae serovar copenhageni (strain Fiocruz L1-130).